Here is an 839-residue protein sequence, read N- to C-terminus: MRPRATTICSLFFLLRVLAEPAKNSDFYLPGDYLLGGLFTLHANMKGIVHLDYLQVPMCKEYETKVIGYNLMQAMRFAVEEINNDSSLLPDVLLGYEMVDVCYVSNNVQPVLYFLAQEDDLLPIQENYSNYVPRVVAVIGPDNSDAVMTVANFLSLFLLPQITYSAISDELRDKVRFPALLRTAPSADHHIEAMVQLMLHFRWNWIIVLVSGDTYGRDNGQLLGDRLARGDICIAFQETLPTVQPNQNMTSEERQRLVTIVDKLQQSTARVVVVFSPDLTLYNFFNEVLRQNFTGAVWIASESWAIDPVLHNLTELRHMGTFLGITIQSVPIPGFSEFRVRDPQAGPPPLSRTSQRSTCNQECDSCLNGTLSFNNVLRLSGERVVYSVYSAVYAVAHALHSLLGCDHGTCTKREVYPWQLLKEIWKVNFTLLDHEISFDPQGDMALHLEIVQWQWGLSQNPFQSVASYYPLQRQLKKIQDISWHTINNTIPVSMCSKRCQSGQKKKPVGIHICCFECIDCLPGTFLNQTEDEFECQACPSNEWSHQSEASCFKRRLAFLEWHEAPTIVVALLAALGFLSTLAILVIFWRHFQTPMVRSAGGPMCFLMLTLLLVAYMVVPVYVGPPKVSTCFCRQALFPLCFTICISCIAVRSFQIVCVFKMASRFPRAYSYWVRYQGPYVSMAFITVLKMVTVVIGMLATGLNPTTRIDPDDPKIMIVSCNPNYRNSLFFNTGLDLLLSVVGFSFAYMGKELPTNYNEAKFITLSMTFYFTSSVSLCTFMSAYNGVLVTIMDLLVTVLNLLAISLGYFGPKCYMILFYPERNTPAYFNSMIQGYTMRRD.

Residues 1–19 (MRPRATTICSLFFLLRVLA) form the signal peptide. At 20–566 (EPAKNSDFYL…AFLEWHEAPT (547 aa)) the chain is on the extracellular side. N-linked (GlcNAc...) asparagine glycans are attached at residues asparagine 84, asparagine 127, asparagine 248, asparagine 292, asparagine 312, asparagine 368, asparagine 428, asparagine 487, and asparagine 527. A helical transmembrane segment spans residues 567 to 587 (IVVALLAALGFLSTLAILVIF). Residues 588 to 602 (WRHFQTPMVRSAGGP) are Cytoplasmic-facing. Residues 603–623 (MCFLMLTLLLVAYMVVPVYVG) traverse the membrane as a helical segment. Residues 624-635 (PPKVSTCFCRQA) lie on the Extracellular side of the membrane. A helical transmembrane segment spans residues 636–656 (LFPLCFTICISCIAVRSFQIV). Over 657–681 (CVFKMASRFPRAYSYWVRYQGPYVS) the chain is Cytoplasmic. The chain crosses the membrane as a helical span at residues 682–702 (MAFITVLKMVTVVIGMLATGL). At 703–727 (NPTTRIDPDDPKIMIVSCNPNYRNS) the chain is on the extracellular side. A helical membrane pass occupies residues 728-748 (LFFNTGLDLLLSVVGFSFAYM). Over 749–760 (GKELPTNYNEAK) the chain is Cytoplasmic. The helical transmembrane segment at 761-781 (FITLSMTFYFTSSVSLCTFMS) threads the bilayer. Over 782–784 (AYN) the chain is Extracellular. Residues 785 to 805 (GVLVTIMDLLVTVLNLLAISL) form a helical membrane-spanning segment. Residues 806–839 (GYFGPKCYMILFYPERNTPAYFNSMIQGYTMRRD) lie on the Cytoplasmic side of the membrane.

This sequence belongs to the G-protein coupled receptor 3 family. TAS1R subfamily. Forms heterodimers with TAS1R3.

The protein resides in the cell membrane. Its function is as follows. Putative taste receptor. TAS1R2/TAS1R3 recognizes diverse natural and synthetic sweeteners. This is Taste receptor type 1 member 2 (TAS1R2) from Macaca mulatta (Rhesus macaque).